The chain runs to 131 residues: Transcription antitermination protein NusB (131 aa).

Belongs to the NusB family.

Involved in transcription antitermination. Required for transcription of ribosomal RNA (rRNA) genes. Binds specifically to the boxA antiterminator sequence of the ribosomal RNA (rrn) operons. This chain is Transcription antitermination protein NusB, found in Caldicellulosiruptor saccharolyticus (strain ATCC 43494 / DSM 8903 / Tp8T 6331).